The sequence spans 119 residues: NADH-quinone oxidoreductase subunit A (119 aa).

3 helical membrane-spanning segments follow: residues 7–27, 63–83, and 88–108; these read YPVL…VSIG, LVAI…PWGV, and IGWP…LGFA.

The protein belongs to the complex I subunit 3 family. In terms of assembly, NDH-1 is composed of 14 different subunits. Subunits NuoA, H, J, K, L, M, N constitute the membrane sector of the complex.

It localises to the cell inner membrane. It carries out the reaction a quinone + NADH + 5 H(+)(in) = a quinol + NAD(+) + 4 H(+)(out). In terms of biological role, NDH-1 shuttles electrons from NADH, via FMN and iron-sulfur (Fe-S) centers, to quinones in the respiratory chain. The immediate electron acceptor for the enzyme in this species is believed to be ubiquinone. Couples the redox reaction to proton translocation (for every two electrons transferred, four hydrogen ions are translocated across the cytoplasmic membrane), and thus conserves the redox energy in a proton gradient. This is NADH-quinone oxidoreductase subunit A from Burkholderia mallei (strain NCTC 10247).